We begin with the raw amino-acid sequence, 939 residues long: Isoleucine--tRNA ligase (939 aa).

Positions 58–68 (PYANGDIHIGH) match the 'HIGH' region motif. E574 is a binding site for L-isoleucyl-5'-AMP. The 'KMSKS' region motif lies at 615-619 (KMSKS). K618 lines the ATP pocket. The Zn(2+) site is built by C902, C905, C922, and C925.

This sequence belongs to the class-I aminoacyl-tRNA synthetase family. IleS type 1 subfamily. Monomer. Zn(2+) is required as a cofactor.

The protein localises to the cytoplasm. It carries out the reaction tRNA(Ile) + L-isoleucine + ATP = L-isoleucyl-tRNA(Ile) + AMP + diphosphate. In terms of biological role, catalyzes the attachment of isoleucine to tRNA(Ile). As IleRS can inadvertently accommodate and process structurally similar amino acids such as valine, to avoid such errors it has two additional distinct tRNA(Ile)-dependent editing activities. One activity is designated as 'pretransfer' editing and involves the hydrolysis of activated Val-AMP. The other activity is designated 'posttransfer' editing and involves deacylation of mischarged Val-tRNA(Ile). This Aromatoleum aromaticum (strain DSM 19018 / LMG 30748 / EbN1) (Azoarcus sp. (strain EbN1)) protein is Isoleucine--tRNA ligase.